A 142-amino-acid polypeptide reads, in one-letter code: 3-hydroxyacyl-[acyl-carrier-protein] dehydratase FabZ (142 aa).

H48 is a catalytic residue.

This sequence belongs to the thioester dehydratase family. FabZ subfamily.

It is found in the cytoplasm. The catalysed reaction is a (3R)-hydroxyacyl-[ACP] = a (2E)-enoyl-[ACP] + H2O. In terms of biological role, involved in unsaturated fatty acids biosynthesis. Catalyzes the dehydration of short chain beta-hydroxyacyl-ACPs and long chain saturated and unsaturated beta-hydroxyacyl-ACPs. This Prochlorococcus marinus (strain MIT 9313) protein is 3-hydroxyacyl-[acyl-carrier-protein] dehydratase FabZ.